The chain runs to 107 residues: Protein HitA (107 aa).

Residues 5 to 107 (IFCKIAAKEI…LHIHIMGTPV (103 aa)) form the HIT domain. The short motif at 97-101 (HLHIH) is the Histidine triad motif element.

This chain is Protein HitA (hitA), found in Neisseria gonorrhoeae.